We begin with the raw amino-acid sequence, 314 residues long: MGPLINRCKKILLPTTVPPATMRIWLLGGPLPFLLLLSGLQRPTEGSEVAIKIDFDFAPGSFDDQYQGCSKQVMEKLTQGDYFTKDIEAQKNYFRMWQKAHLAWLNQGKVLPQNMTTTHAVAILFYTLNSNVHSDFTRAMASVARTPQQYERSFHFKYLHYYLTSAIQLLRKDSIMENGTLCYEVHYRTKDVHFNAYTGATIRFGQFLSTSLLKEEAQEFGNQTLFTIFTCLGAPVQYFSLKKEVLIPPYELFKVINMSYHPRGNWLQLRSTGNLSTYNCQLLKASSKKCIPDPIAIASLSFLTSVIIFSKSRV.

An N-terminal signal peptide occupies residues 1 to 46 (MGPLINRCKKILLPTTVPPATMRIWLLGGPLPFLLLLSGLQRPTEG). Cystine bridges form between cysteine 69/cysteine 280 and cysteine 182/cysteine 231. One can recognise a TR mART core domain in the interval 91–276 (KNYFRMWQKA…LQLRSTGNLS (186 aa)). Asparagine 114 carries N-linked (GlcNAc...) asparagine glycosylation. Tyrosine 126 contacts NAD(+). Asparagine 178 carries an N-linked (GlcNAc...) asparagine glycan. Glutamine 206 provides a ligand contact to NAD(+). N-linked (GlcNAc...) asparagine glycosylation is present at asparagine 222. Serine 240 is an NAD(+) binding site. N-linked (GlcNAc...) asparagine glycans are attached at residues asparagine 257 and asparagine 274. Residue alanine 285 is the site of GPI-anchor amidated alanine attachment. Residues 286–314 (SSKKCIPDPIAIASLSFLTSVIIFSKSRV) constitute a propeptide, removed in mature form.

It belongs to the Arg-specific ADP-ribosyltransferase family.

The protein localises to the cell membrane. It catalyses the reaction L-arginyl-[protein] + NAD(+) = N(omega)-(ADP-D-ribosyl)-L-arginyl-[protein] + nicotinamide + H(+). In Pan troglodytes (Chimpanzee), this protein is Ecto-ADP-ribosyltransferase 4 (ART4).